The following is a 93-amino-acid chain: uncharacterized protein (93 aa).

This is an uncharacterized protein from Homo sapiens (Human).